Here is a 494-residue protein sequence, read N- to C-terminus: Aspartyl/glutamyl-tRNA(Asn/Gln) amidotransferase subunit B (494 aa).

The segment at 475 to 494 is disordered; sequence TSGRADPKATNQMLAKKLKG.

It belongs to the GatB/GatE family. GatB subfamily. In terms of assembly, heterotrimer of A, B and C subunits.

It catalyses the reaction L-glutamyl-tRNA(Gln) + L-glutamine + ATP + H2O = L-glutaminyl-tRNA(Gln) + L-glutamate + ADP + phosphate + H(+). It carries out the reaction L-aspartyl-tRNA(Asn) + L-glutamine + ATP + H2O = L-asparaginyl-tRNA(Asn) + L-glutamate + ADP + phosphate + 2 H(+). Functionally, allows the formation of correctly charged Asn-tRNA(Asn) or Gln-tRNA(Gln) through the transamidation of misacylated Asp-tRNA(Asn) or Glu-tRNA(Gln) in organisms which lack either or both of asparaginyl-tRNA or glutaminyl-tRNA synthetases. The reaction takes place in the presence of glutamine and ATP through an activated phospho-Asp-tRNA(Asn) or phospho-Glu-tRNA(Gln). The chain is Aspartyl/glutamyl-tRNA(Asn/Gln) amidotransferase subunit B from Acaryochloris marina (strain MBIC 11017).